A 1107-amino-acid chain; its full sequence is MSQAQDYECRSHHVDEQEPRIPGSSTRLEWVEIIEPRTRERMYANLVTGECVWDPPAGVRIKRTSEDQWWELFDPNTSRFYYYSAASQRTVWHRPQNCDIIPLAKLQTLKQNTESPRASADNSPGRGSRDGSTGSSLEPELEERTQELPVRSGRATTLVTSKEDTSSCSPPGVLLEKDYEVYRDYSADGQLLHYRTSSLRWNSGNKERMLIKVADREPSFLTPQGNGYPADNQPGGHHRRPSGSQHSPNLQTFVPDTDGTVFFPERRPSPFLRRAELSGNCSPLLIQPRKPSSDSQPSSPRYGYEPPLYEEPPVEYQAPIYDEPPMDVQFEANSPYQTGSPQRSPGRKPHPFLQTTKQTPTSPCQQLMRTKQKCPERFLSLEYSPVGKEYVRQLVYVEQAGSSPKLRAGPRHKYAPNPGGGTYSLQPSPCLLRDQRLGVRSGDYSTMEGPESRPSQPPTPLPQAQEDAMSWSSQQDTMSSTGYSPGTRKRKNRKPSLCQVPSTSSTDGAGGLLGEQPLTEERSPCRASLTPVKAEADLVRGTPEPFLAQARLAWEAQQAHFHMKQRGSWDSQQDGSGYESDGAVPLPMPGPVVRAFSEDEALAQQDSKHWKRSTFDKLGFPQILLEKSVSVQTNLASPEPHLHPSQSEDLGACAQFESSRQNRSAMPSSSCVFPTFTLRKPSSETDIENWASKHFNKHTQGLFRRKVSIANMLAWSSESIKKPMIVTSDRHVKKEACEIFKLIQMYMGDRRAKADPLHVALEIATKGWSAQGLRDELYIQLCRQTTENFRLESLARGWELMAICLAFFPPTPKFHSYLEGYIYRHMDPVNDTKVTQHIKELLERNSKKKSKLRKKPKPYVEEPDGVAISTYAKYCYHKLQKAALTGAKKGLKKPNVEEIRHAKNAVFSPSMFGSALQEVMSMQKERYPDRQLPWVQTRLSEEVLALNGDQTEGIFRVPGDIDEVNALKLQVDQWKVPTGLEDPHVPASLLKLWYRELEEPLIPHEFYEQCIAHYESPEAAVAVVHALPRINRMVLCYLIRFLQVFVQPANVAITKMDVSNLAMVMAPNCLRCQSDDPRVIFENTRKEMSFLRVLIQHLDTSFMEGVL.

A disordered region spans residues 1–21; the sequence is MSQAQDYECRSHHVDEQEPRI. At serine 2 the chain carries N-acetylserine. Basic and acidic residues predominate over residues 7–19; the sequence is YECRSHHVDEQEP. WW domains are found at residues 25-58 and 63-97; these read STRL…PPAG and RTSE…RPQN. A compositionally biased stretch (polar residues) spans 111 to 122; sequence QNTESPRASADN. Disordered regions lie at residues 111-173, 218-267, 282-311, and 326-370; these read QNTE…PPGV, PSFL…PERR, SPLL…LYEE, and MDVQ…LMRT. Residues 123–136 show a composition bias toward low complexity; it reads SPGRGSRDGSTGSS. The segment covering 242-254 has biased composition (polar residues); sequence SGSQHSPNLQTFV. At serine 282 the chain carries Phosphoserine. Polar residues-rich tracts occupy residues 331-343 and 353-369; these read EANS…SPQR and LQTT…QLMR. Phosphoserine occurs at positions 380, 384, 402, and 403. Disordered stretches follow at residues 404 to 429, 441 to 529, and 563 to 585; these read PKLR…QPSP, SGDY…RASL, and MKQR…GAVP. The span at 470-484 shows a compositional bias: polar residues; the sequence is SWSSQQDTMSSTGYS. Phosphoserine occurs at positions 597, 683, 708, and 719. The region spanning 715-867 is the MyTH4 domain; that stretch reads WSSESIKKPM…PYVEEPDGVA (153 aa). The Rho-GAP domain occupies 914–1102; it reads SALQEVMSMQ…VLIQHLDTSF (189 aa).

The protein localises to the nucleus. The chain is Rho GTPase-activating protein 39 (Arhgap39) from Mus musculus (Mouse).